We begin with the raw amino-acid sequence, 278 residues long: Probable endonuclease 4 (278 aa).

Residues histidine 69, histidine 109, glutamate 145, aspartate 179, histidine 182, histidine 216, aspartate 229, histidine 231, and glutamate 261 each contribute to the Zn(2+) site.

The protein belongs to the AP endonuclease 2 family. The cofactor is Zn(2+).

It catalyses the reaction Endonucleolytic cleavage to 5'-phosphooligonucleotide end-products.. Endonuclease IV plays a role in DNA repair. It cleaves phosphodiester bonds at apurinic or apyrimidinic (AP) sites, generating a 3'-hydroxyl group and a 5'-terminal sugar phosphate. The sequence is that of Probable endonuclease 4 from Buchnera aphidicola subsp. Baizongia pistaciae (strain Bp).